The sequence spans 407 residues: Lysosome-associated membrane glycoprotein 1 (407 aa).

The signal sequence occupies residues 1 to 21; the sequence is MAAPGARRPLLLLLLAGLAHS. The interval 22-189 is first lumenal domain; the sequence is APALFEVKDN…SKEETRCPQD (168 aa). Residues 22 to 371 are Lumenal-facing; it reads APALFEVKDN…VEECVQDGNN (350 aa). 10 N-linked (GlcNAc...) asparagine glycosylation sites follow: Asn32, Asn59, Asn71, Asn79, Asn102, Asn116, Asn125, Asn145, Asn160, and Asn178. Residues Cys36 and Cys75 are joined by a disulfide bond. An intrachain disulfide couples Cys150 to Cys186. The interval 180–211 is disordered; it reads SKEETRCPQDQPSPTTGPPSPSPPLVPTNPSV. Positions 190–219 are hinge; it reads QPSPTTGPPSPSPPLVPTNPSVSKYNVTGD. A compositionally biased stretch (pro residues) spans 194 to 206; that stretch reads TTGPPSPSPPLVP. 8 N-linked (GlcNAc...) asparagine glycosylation sites follow: Asn215, Asn220, Asn233, Asn241, Asn271, Asn283, Asn297, and Asn312. A second lumenal domain region spans residues 220 to 371; sequence NGTCLLASMA…VEECVQDGNN (152 aa). Cys223 and Cys260 are disulfide-bonded. A disulfide bridge connects residues Cys328 and Cys365. A helical transmembrane segment spans residues 372–395; sequence MLIPIAVGGALAGLVLIVLIAYLI. Over 396 to 407 the chain is Cytoplasmic; that stretch reads GRKRSHAGYQTI.

The protein belongs to the LAMP family. As to quaternary structure, interacts with ABCB9; this interaction strongly stabilizes ABCB9 and protects ABCB9 against lysosomal degradation. Interacts with FURIN. Interacts with TMEM175; inhibiting the proton channel activity of TMEM175. O- and N-glycosylated; some of the N-glycans attached to LAMP-1 are polylactosaminoglycans.

The protein localises to the lysosome membrane. It is found in the endosome membrane. Its subcellular location is the late endosome membrane. The protein resides in the cell membrane. It localises to the cytolytic granule membrane. Functionally, lysosomal membrane glycoprotein which plays an important role in lysosome biogenesis, lysosomal pH regulation, autophagy and cholesterol homeostasis. Acts as an important regulator of lysosomal lumen pH regulation by acting as a direct inhibitor of the proton channel TMEM175, facilitating lysosomal acidification for optimal hydrolase activity. Also plays an important role in NK-cells cytotoxicity. Mechanistically, participates in cytotoxic granule movement to the cell surface and perforin trafficking to the lytic granule. In addition, protects NK-cells from degranulation-associated damage induced by their own cytotoxic granule content. Presents carbohydrate ligands to selectins. The polypeptide is Lysosome-associated membrane glycoprotein 1 (Lamp1) (Rattus norvegicus (Rat)).